Consider the following 158-residue polypeptide: Glutathione peroxidase homolog BsaA (158 aa).

C36 is an active-site residue.

It belongs to the glutathione peroxidase family.

The chain is Glutathione peroxidase homolog BsaA (bsaA) from Staphylococcus epidermidis (strain ATCC 12228 / FDA PCI 1200).